A 234-amino-acid chain; its full sequence is MRTVSRNEIKRCSAAPRREITGLYAITPDTGDTSHLVAMTWRALAGGARLVQYRSKTLNEELHREQARSLAHLCRRFDVPLLINDHIDLALEVGADGVHLGREDAPISQARLKLGHEKIIGISCYNELESAIEAECNGADYVAFGAFFNSVTKTDTVPASIDLLRQGNLEIRIPIVAIGGINSDNALELISAGADAVAVSNALFGARDIRSEAAKFSGLFKRQSFHPSLSRTSQ.

4-amino-2-methyl-5-(diphosphooxymethyl)pyrimidine is bound by residues 52–56 and asparagine 84; that span reads QYRSK. Aspartate 85 and aspartate 104 together coordinate Mg(2+). Serine 123 contacts 4-amino-2-methyl-5-(diphosphooxymethyl)pyrimidine. A 2-[(2R,5Z)-2-carboxy-4-methylthiazol-5(2H)-ylidene]ethyl phosphate-binding site is contributed by 150-152; it reads SVT. Lysine 153 serves as a coordination point for 4-amino-2-methyl-5-(diphosphooxymethyl)pyrimidine. 2-[(2R,5Z)-2-carboxy-4-methylthiazol-5(2H)-ylidene]ethyl phosphate is bound at residue glycine 180.

It belongs to the thiamine-phosphate synthase family. Requires Mg(2+) as cofactor.

The enzyme catalyses 2-[(2R,5Z)-2-carboxy-4-methylthiazol-5(2H)-ylidene]ethyl phosphate + 4-amino-2-methyl-5-(diphosphooxymethyl)pyrimidine + 2 H(+) = thiamine phosphate + CO2 + diphosphate. It carries out the reaction 2-(2-carboxy-4-methylthiazol-5-yl)ethyl phosphate + 4-amino-2-methyl-5-(diphosphooxymethyl)pyrimidine + 2 H(+) = thiamine phosphate + CO2 + diphosphate. The catalysed reaction is 4-methyl-5-(2-phosphooxyethyl)-thiazole + 4-amino-2-methyl-5-(diphosphooxymethyl)pyrimidine + H(+) = thiamine phosphate + diphosphate. It participates in cofactor biosynthesis; thiamine diphosphate biosynthesis; thiamine phosphate from 4-amino-2-methyl-5-diphosphomethylpyrimidine and 4-methyl-5-(2-phosphoethyl)-thiazole: step 1/1. Functionally, condenses 4-methyl-5-(beta-hydroxyethyl)thiazole monophosphate (THZ-P) and 2-methyl-4-amino-5-hydroxymethyl pyrimidine pyrophosphate (HMP-PP) to form thiamine monophosphate (TMP). The protein is Thiamine-phosphate synthase of Nitrosospira multiformis (strain ATCC 25196 / NCIMB 11849 / C 71).